Reading from the N-terminus, the 181-residue chain is ATP synthase subunit delta (181 aa).

The protein belongs to the ATPase delta chain family. As to quaternary structure, F-type ATPases have 2 components, F(1) - the catalytic core - and F(0) - the membrane proton channel. F(1) has five subunits: alpha(3), beta(3), gamma(1), delta(1), epsilon(1). F(0) has three main subunits: a(1), b(2) and c(10-14). The alpha and beta chains form an alternating ring which encloses part of the gamma chain. F(1) is attached to F(0) by a central stalk formed by the gamma and epsilon chains, while a peripheral stalk is formed by the delta and b chains.

The protein localises to the cell inner membrane. In terms of biological role, f(1)F(0) ATP synthase produces ATP from ADP in the presence of a proton or sodium gradient. F-type ATPases consist of two structural domains, F(1) containing the extramembraneous catalytic core and F(0) containing the membrane proton channel, linked together by a central stalk and a peripheral stalk. During catalysis, ATP synthesis in the catalytic domain of F(1) is coupled via a rotary mechanism of the central stalk subunits to proton translocation. Its function is as follows. This protein is part of the stalk that links CF(0) to CF(1). It either transmits conformational changes from CF(0) to CF(1) or is implicated in proton conduction. This is ATP synthase subunit delta from Chlorobium limicola (strain DSM 245 / NBRC 103803 / 6330).